The chain runs to 1608 residues: DNA-directed RNA polymerase III subunit rpc2 (1608 aa).

Zn(2+)-binding residues include cysteine 1557, cysteine 1560, cysteine 1569, and cysteine 1572. Residues 1557-1572 (CKNCGFLGYEGYCQYC) form a C4-type zinc finger.

This sequence belongs to the RNA polymerase beta chain family. Component of the RNA polymerase III (Pol III) complex. Post-translationally, this protein undergoes a protein self splicing that involves a post-translational excision of the intervening region (intein) followed by peptide ligation.

The protein resides in the nucleus. It catalyses the reaction RNA(n) + a ribonucleoside 5'-triphosphate = RNA(n+1) + diphosphate. In terms of biological role, DNA-dependent RNA polymerase catalyzes the transcription of DNA into RNA using the four ribonucleoside triphosphates as substrates. Second largest core component of RNA polymerase III which synthesizes small RNAs, such as 5S rRNA and tRNAs. Proposed to contribute to the polymerase catalytic activity and forms the polymerase active center together with the largest subunit. Pol III is composed of mobile elements and rpc2 is part of the core element with the central large cleft and probably a clamp element that moves to open and close the cleft. This chain is DNA-directed RNA polymerase III subunit rpc2 (polr3b), found in Dictyostelium discoideum (Social amoeba).